A 402-amino-acid polypeptide reads, in one-letter code: Putative F-box protein At4g22180 (402 aa).

Positions 18-64 (PNSWSELPLDLLTAVFERLSYANFQRAKSVCSSWHSGSRQSVPIQIP) constitute an F-box domain.

The sequence is that of Putative F-box protein At4g22180 from Arabidopsis thaliana (Mouse-ear cress).